The sequence spans 394 residues: uncharacterized protein (394 aa).

8 consecutive transmembrane segments (helical) span residues 22–42 (VLVS…VLLH), 60–80 (LALF…LLLF), 81–101 (GFTG…APVA), 231–251 (LHLA…YLWL), 271–291 (GFCA…QLAP), 303–323 (LFLV…GDWP), 328–348 (LLGV…APWL), and 355–375 (ALGP…HAWM).

It is found in the cell membrane. This is an uncharacterized protein from Pseudomonas aeruginosa (strain ATCC 15692 / DSM 22644 / CIP 104116 / JCM 14847 / LMG 12228 / 1C / PRS 101 / PAO1).